Reading from the N-terminus, the 757-residue chain is Chloride anion exchanger (757 aa).

Residues 1–71 (MIEAIGNQYV…SWLPAYKIKE (71 aa)) are Cytoplasmic-facing. Residues 72-92 (WLLSDIVSGISTGLVAVLQGL) traverse the membrane as a helical segment. Residue Ala-93 is a topological domain, extracellular. The chain crosses the membrane as a helical span at residues 94-114 (FALLVNIPPAYGLYAAFFPVI). Residues 115 to 124 (TYFFLGTSRH) are Cytoplasmic-facing. A helical transmembrane segment spans residues 125–145 (ISVGPFPVLSMMVGVVVTRVV). Residues 146–176 (SDPNASSELSSSSTENDSFIEEKVMVAASVT) are Extracellular-facing. Residues Asn-149 and Asn-161 are each glycosylated (N-linked (GlcNAc...) asparagine). The chain crosses the membrane as a helical span at residues 177–197 (VLSGIIQLLLGVLQVGFVVIY). The Cytoplasmic segment spans residues 198–201 (LSES). The helical transmembrane segment at 202 to 222 (LISGFTTAAAIHVLVSQLKFM) threads the bilayer. Residues 223–250 (LQLPVPAYSDPFSIFKVLESVFTQIQKT) lie on the Extracellular side of the membrane. The chain crosses the membrane as a helical span at residues 251–271 (NIADLVTSVIILVVVFVFKEI). Residues 272–278 (NQRYRSK) are Cytoplasmic-facing. A helical transmembrane segment spans residues 279–299 (LPVPIPIELIMTVIATGVSYG). Residues 300-335 (CNFEDRFGVAVVGNMSLGFQPPITPSVEVFQDTIGD) are Extracellular-facing. The chain crosses the membrane as a helical span at residues 336-356 (SFGIAIVGFAVAFSVASVYSL). Over 357-367 (KYDYPIDGNQE) the chain is Cytoplasmic. A helical membrane pass occupies residues 368–388 (LIALGVSNIFTGAFKGFAGST). Residues 389-404 (ALSRSGVQESTGGKTQ) are Extracellular-facing. The chain crosses the membrane as a helical span at residues 405-425 (VAGLLSAVIVLIVIVAIGFLL). Residues 426-462 (QPLQKSVLAALALGNLKGMLMQFAEIGRLWKKDKYDC) lie on the Cytoplasmic side of the membrane. Residues 463-483 (LIWIMTFIFAIVLGLGLGLAA) form a helical membrane-spanning segment. Residues 484–757 (SVAFQLLTIV…ECQVPVETKF (274 aa)) lie on the Extracellular side of the membrane. In terms of domain architecture, STAS spans 518 to 713 (NYAEVYEPEG…LTIHDAILHI (196 aa)). The PDZ-binding signature appears at 754 to 757 (ETKF).

The protein belongs to the SLC26A/SulP transporter (TC 2.A.53) family. As to quaternary structure, interacts with PDZK1. Interacts with CFTR, SLC26A6 and NHERF1. Interacts (via PDZ-binding motif) with NHERF4 (via the third PDZ domain). This interaction leads to decreased expression of SLC26A3 on the cell membrane resulting in its reduced exchanger activity. In terms of processing, N-glycosylation is required for efficient cell surface expression, and protection from proteolytic degradation. Expressed in spermatogenic cells. Expressed at high levels in cecum and colon and at lower levels in small intestine.

It localises to the apical cell membrane. The protein localises to the membrane. It is found in the cell membrane. It catalyses the reaction hydrogencarbonate(in) + 2 chloride(out) = hydrogencarbonate(out) + 2 chloride(in). In terms of biological role, mediates chloride-bicarbonate exchange with a chloride bicarbonate stoichiometry of 2:1 in the intestinal epithelia. Plays a role in the chloride and bicarbonate homeostasis during sperm epididymal maturation and capacitation. The protein is Chloride anion exchanger (Slc26a3) of Mus musculus (Mouse).